The following is a 199-amino-acid chain: 7-methyl-GTP pyrophosphatase (199 aa).

Catalysis depends on aspartate 73, which acts as the Proton acceptor.

It belongs to the Maf family. YceF subfamily. A divalent metal cation is required as a cofactor.

It is found in the cytoplasm. It catalyses the reaction N(7)-methyl-GTP + H2O = N(7)-methyl-GMP + diphosphate + H(+). Functionally, nucleoside triphosphate pyrophosphatase that hydrolyzes 7-methyl-GTP (m(7)GTP). May have a dual role in cell division arrest and in preventing the incorporation of modified nucleotides into cellular nucleic acids. In Bordetella pertussis (strain Tohama I / ATCC BAA-589 / NCTC 13251), this protein is 7-methyl-GTP pyrophosphatase.